Reading from the N-terminus, the 334-residue chain is L-lactate dehydrogenase B chain (334 aa).

Position 2 is an N-acetylalanine (Ala-2). Position 7 is an N6-acetyllysine (Lys-7). A Phosphoserine modification is found at Ser-44. NAD(+)-binding positions include 53-58 (DVLEDK) and Arg-100. Lys-58 is subject to N6-acetyllysine. Arg-107 contributes to the substrate binding site. Lys-119 is modified (N6-acetyllysine). Asn-139 is a binding site for NAD(+). Substrate contacts are provided by Asn-139 and Arg-170. The active-site Proton acceptor is His-194. Position 240 is a phosphotyrosine (Tyr-240). Thr-249 serves as a coordination point for substrate. N6-acetyllysine is present on Lys-329.

It belongs to the LDH/MDH superfamily. LDH family. In terms of assembly, homotetramer. Interacts with PTEN upstream reading frame protein MP31; the interaction leads to inhibition of mitochondrial lactate dehydrogenase activity, preventing conversion of lactate to pyruvate in mitochondria.

Its subcellular location is the cytoplasm. The protein localises to the mitochondrion inner membrane. The enzyme catalyses (S)-lactate + NAD(+) = pyruvate + NADH + H(+). The protein operates within fermentation; pyruvate fermentation to lactate; (S)-lactate from pyruvate: step 1/1. Its function is as follows. Interconverts simultaneously and stereospecifically pyruvate and lactate with concomitant interconversion of NADH and NAD(+). The chain is L-lactate dehydrogenase B chain (LDHB) from Bos taurus (Bovine).